Consider the following 189-residue polypeptide: MENNKCGTMRGESVYLAYPFILGSVIFVEFFIFGLVYLTFGLGLKTIIITSGVILICLLPISIILIRLFIKSIAGKNKGKLIKKYTKLKILNKKYKILKVLLFIVGINFYLFGNLVSLNINPYTKFVLYSISAFFIIISIVVGDVIVEFYENGVFINPLGFYKWGEVGKEDLNDRLILKIDKLVIECKR.

Helical transmembrane passes span 20-40 (FILGSVIFVEFFIFGLVYLTF), 46-66 (TIIITSGVILICLLPISIILI), 100-120 (VLLFIVGINFYLFGNLVSLNI), and 126-146 (FVLYSISAFFIIISIVVGDVI).

It to M.jannaschii MJ0795.1 and MJ1249.1.

The protein resides in the cell membrane. This is an uncharacterized protein from Methanocaldococcus jannaschii (strain ATCC 43067 / DSM 2661 / JAL-1 / JCM 10045 / NBRC 100440) (Methanococcus jannaschii).